Consider the following 323-residue polypeptide: Voltage-dependent calcium channel gamma-2 subunit (323 aa).

The helical transmembrane segment at 10–30 (MLLTTVGAFAAFSLMTIAVGT) threads the bilayer. A glycan (N-linked (GlcNAc...) asparagine) is linked at Asn48. The next 3 helical transmembrane spans lie at 104–124 (SSIF…CIAA), 134–154 (IILS…IGII), and 182–202 (FGAL…HMFI). The segment at 233–261 (YQRRSRSSSRSTEPSHSRDASPVGIKGFN) is disordered. Position 253 is a phosphoserine (Ser253). A Phosphotyrosine modification is found at Tyr271. The residue at position 321 (Thr321) is a Phosphothreonine.

The protein belongs to the PMP-22/EMP/MP20 family. CACNG subfamily. In terms of assembly, the L-type calcium channel is composed of five subunits: alpha-1, alpha-2/delta, beta and gamma. Interacts with the PDZ domains of DLG4/PSD-95 and DLG1/SAP97. May interact with GOPC. Acts as an auxiliary subunit for AMPA-selective glutamate receptors (AMPARs). Found in a complex with GRIA1, GRIA2, GRIA3, GRIA4, CNIH2, CNIH3, CACNG3, CACNG4, CACNG5, CACNG7 and CACNG8. Interacts with GRIA1 and GRIA2. Interacts with MPP2. Phosphorylation of Thr-321 impairs interaction with DLG1 and DLG4. Brain.

It localises to the membrane. It is found in the synapse. The protein resides in the synaptosome. Functionally, regulates the trafficking and gating properties of AMPA-selective glutamate receptors (AMPARs). Promotes their targeting to the cell membrane and synapses and modulates their gating properties by slowing their rates of activation, deactivation and desensitization. Does not show subunit-specific AMPA receptor regulation and regulates all AMPAR subunits. Thought to stabilize the calcium channel in an inactivated (closed) state. In Homo sapiens (Human), this protein is Voltage-dependent calcium channel gamma-2 subunit (CACNG2).